The sequence spans 208 residues: MKVVEVKHPLVRHKIGLMREGDISTKRFRELAAEVGSLLTYEATADFETEAVTIEGWNGPVEVEQIKGKKVTVVPILRAGLGMMDGVLEHIPSARISVVGMYRDEETLEPVPYFEKLASDMPSRIALVVDPMLATGGSMISTIDLLKERGCTSIKALVLVAAPEGVAALEKAHPDIELYTASIDDCLNDQGYILPGLGDAGDKIFGTK.

Residues Arg78, Arg103, and 130-138 (DPMLATGGS) contribute to the 5-phospho-alpha-D-ribose 1-diphosphate site. Residues Ile193 and 198–200 (GDA) contribute to the uracil site. Asp199 is a binding site for 5-phospho-alpha-D-ribose 1-diphosphate.

It belongs to the UPRTase family. It depends on Mg(2+) as a cofactor.

It carries out the reaction UMP + diphosphate = 5-phospho-alpha-D-ribose 1-diphosphate + uracil. The protein operates within pyrimidine metabolism; UMP biosynthesis via salvage pathway; UMP from uracil: step 1/1. Allosterically activated by GTP. Catalyzes the conversion of uracil and 5-phospho-alpha-D-ribose 1-diphosphate (PRPP) to UMP and diphosphate. This chain is Uracil phosphoribosyltransferase, found in Shewanella woodyi (strain ATCC 51908 / MS32).